Here is a 79-residue protein sequence, read N- to C-terminus: Acyl carrier protein (79 aa).

The Carrier domain maps to 2 to 77 (SEIGERVKKI…DATKFLEKNA (76 aa)). At Ser-37 the chain carries O-(pantetheine 4'-phosphoryl)serine.

It belongs to the acyl carrier protein (ACP) family. 4'-phosphopantetheine is transferred from CoA to a specific serine of apo-ACP by AcpS. This modification is essential for activity because fatty acids are bound in thioester linkage to the sulfhydryl of the prosthetic group.

It localises to the cytoplasm. It functions in the pathway lipid metabolism; fatty acid biosynthesis. Functionally, carrier of the growing fatty acid chain in fatty acid biosynthesis. This is Acyl carrier protein from Afipia carboxidovorans (strain ATCC 49405 / DSM 1227 / KCTC 32145 / OM5) (Oligotropha carboxidovorans).